The primary structure comprises 239 residues: Tetraspanin-9 (239 aa).

Residues 1 to 13 (MARGCLCCLKYMM) lie on the Cytoplasmic side of the membrane. The chain crosses the membrane as a helical span at residues 14 to 34 (FLFNLIFWLCGCGLLGVGIWL). Residues 35-55 (SVSQGNFATFSPSFPSLSAAN) are Extracellular-facing. A helical transmembrane segment spans residues 56–76 (LVIAIGTIVMVTGFLGCLGAI). The Cytoplasmic portion of the chain corresponds to 77-85 (KENKCLLLS). The chain crosses the membrane as a helical span at residues 86–106 (FFIVLLVILLAELILLILFFV). Topologically, residues 107 to 203 (YMDKVNENAK…VKMWFDDNKH (97 aa)) are extracellular. Asparagine 180 is a glycosylation site (N-linked (GlcNAc...) asparagine). A helical transmembrane segment spans residues 204–224 (VLGTVGMCILIMQILGMAFSM). Topologically, residues 225–239 (TLFQHIHRTGKKYDA) are cytoplasmic.

This sequence belongs to the tetraspanin (TM4SF) family. As to quaternary structure, found in a complex with GP6. Post-translationally, glycosylated. In terms of tissue distribution, expressed in megakaryocytes and platelets (at protein level).

It is found in the membrane. In Homo sapiens (Human), this protein is Tetraspanin-9 (TSPAN9).